A 91-amino-acid polypeptide reads, in one-letter code: C-C motif chemokine 5 (91 aa).

An N-terminal signal peptide occupies residues 1 to 23 (MKVFAAALAVILATATFCTPASA). 2 cysteine pairs are disulfide-bonded: Cys-33-Cys-57 and Cys-34-Cys-73.

Belongs to the intercrine beta (chemokine CC) family.

Its subcellular location is the secreted. Its function is as follows. Chemoattractant for blood monocytes, memory T-helper cells and eosinophils. Causes the release of histamine from basophils and activates eosinophils. May activate several chemokine receptors including CCR1, CCR3, CCR4 and CCR5. May also be an agonist of the G protein-coupled receptor GPR75. Together with GPR75, may play a role in neuron survival through activation of a downstream signaling pathway involving the PI3, Akt and MAP kinases. By activating GPR75 may also play a role in insulin secretion by islet cells. The chain is C-C motif chemokine 5 (CCL5) from Equus caballus (Horse).